The sequence spans 456 residues: Chromosomal replication initiator protein DnaA (456 aa).

The interval 1 to 73 (MEIYLDNLWD…ADVVHDILGY (73 aa)) is domain I, interacts with DnaA modulators. A domain II region spans residues 73–117 (YPVEIYLTTFLVEDSRKNDSGLIWSEHKSVNILGENLSIPKPLPA). The tract at residues 118–334 (NLNAKYMFSR…GALTRVVTYI (217 aa)) is domain III, AAA+ region. ATP is bound by residues glycine 162, glycine 164, lysine 165, and threonine 166. Residues 335 to 456 (SISGLPMTVE…SDRINFSSRH (122 aa)) are domain IV, binds dsDNA.

The protein belongs to the DnaA family. As to quaternary structure, oligomerizes as a right-handed, spiral filament on DNA at oriC.

Its subcellular location is the cytoplasm. Its function is as follows. Plays an essential role in the initiation and regulation of chromosomal replication. ATP-DnaA binds to the origin of replication (oriC) to initiate formation of the DNA replication initiation complex once per cell cycle. Binds the DnaA box (a 9 base pair repeat at the origin) and separates the double-stranded (ds)DNA. Forms a right-handed helical filament on oriC DNA; dsDNA binds to the exterior of the filament while single-stranded (ss)DNA is stabiized in the filament's interior. The ATP-DnaA-oriC complex binds and stabilizes one strand of the AT-rich DNA unwinding element (DUE), permitting loading of DNA polymerase. After initiation quickly degrades to an ADP-DnaA complex that is not apt for DNA replication. Binds acidic phospholipids. This is Chromosomal replication initiator protein DnaA from Trichodesmium erythraeum (strain IMS101).